Reading from the N-terminus, the 159-residue chain is 6,7-dimethyl-8-ribityllumazine synthase (159 aa).

5-amino-6-(D-ribitylamino)uracil is bound by residues Phe-23, 61 to 63 (SFE), and 85 to 87 (AVI). Residue 90–91 (DT) participates in (2S)-2-hydroxy-3-oxobutyl phosphate binding. The Proton donor role is filled by His-93. Phe-118 is a binding site for 5-amino-6-(D-ribitylamino)uracil. Arg-132 provides a ligand contact to (2S)-2-hydroxy-3-oxobutyl phosphate.

The protein belongs to the DMRL synthase family.

The catalysed reaction is (2S)-2-hydroxy-3-oxobutyl phosphate + 5-amino-6-(D-ribitylamino)uracil = 6,7-dimethyl-8-(1-D-ribityl)lumazine + phosphate + 2 H2O + H(+). It participates in cofactor biosynthesis; riboflavin biosynthesis; riboflavin from 2-hydroxy-3-oxobutyl phosphate and 5-amino-6-(D-ribitylamino)uracil: step 1/2. Catalyzes the formation of 6,7-dimethyl-8-ribityllumazine by condensation of 5-amino-6-(D-ribitylamino)uracil with 3,4-dihydroxy-2-butanone 4-phosphate. This is the penultimate step in the biosynthesis of riboflavin. In Synechococcus sp. (strain RCC307), this protein is 6,7-dimethyl-8-ribityllumazine synthase.